A 917-amino-acid polypeptide reads, in one-letter code: MGSFRSSLFILVLHLLEGAQSNSLIQLNGNGYEGIVIAIDPNVPEDERLIQNIKDMVTKASPYLFEATEKRFYFKNVAILIPASWKAKPEYVKPKLETYKNADVVVTEPNPPENDGPYTEQMGNCGEKGEKIYFTPDFVAGKKVLQYGPQGRVFVHEWAHLRWGVFNEYNNEQKFYLSNKKEQPVICSAAIRGTNVLPQCQGGSCVTKPCRADRVTGLFQKECEFIPDPQQSEKASIMFAQSIDTVVEFCKEKNHNKEAPNDQNQKCNLRSTWEVIQDSEDFKKTTPMTTQPPAPTFSLLQIGQRIVCLVLDKSGSMTVGGRLKRLNQAGKLFLLQTVEQGAWVGMVAFDSAAYVKSELVQINSAAERDALARSLPTAASGGTSICSGLRSAFTVIKKKYPTDGSEIVLLTDGEDNTISACFPEVKQNGAIIHTVALGPSAAKELEELSQMTGGLQTYASDQAENNGLIDAFGALSSGNRAASQRSIQLESQGLTLQNNEWMNGTVVVDSTVGKDTLFLITLERKFLSPIPFFGVPSGRSQDSFLVGKHNKMAYFQVPGTAKVGMWKYSLQASSQTLTLTVSSRRSSATLPPVTVTSKMNKDTGKFPSPMVVYTKIHQGTLPILRAKVTALIESENGKTVTLELLDNGAGADATKNDGIYSRYFTAYDANGRYSVKVWALGGVNTPRRRAPPLWSGAMYIRGWIENGEIKWNPPRPDINKDDLQGKQVCFSRTASGGSFVASDVPKSPIPDLFPPCKITDLKAGIQGDNLINLTWTAPGDDYDHGRADRYIIRISTNILDLRDKFNDSVQVNTTDLIPKEANSEEVFVFKPEGIPFTNGTDLFIAVQAVDKTNLKSEISNIAQVSLFLPPEAPPETPPETPAPSLPCPEIQVNSTIPGIHILKIMWKWLGELQLSIA.

A signal peptide spans 1–21 (MGSFRSSLFILVLHLLEGAQS). The tract at residues 46–199 (DERLIQNIKD…AIRGTNVLPQ (154 aa)) is metalloprotease domain. H156 contacts Zn(2+). Residue E157 is part of the active site. Residues H160 and N167 each coordinate Zn(2+). The VWFA domain maps to 306–475 (IVCLVLDKSG…NGLIDAFGAL (170 aa)). N-linked (GlcNAc...) asparagine glycosylation is found at N503, N772, N806, N812, N838, and N893.

It belongs to the CLCR family. In terms of processing, glycosylated. The translation product is autoproteolytically cleaved by the metalloprotease domain in the endoplasmic reticulum into a N-terminal and a C-terminal products that remain physically associated with each other. The cleavage is necessary for calcium-activated chloride channel (CaCC) activation activity. In terms of tissue distribution, expressed in ileum, trachea, and the major salivary glands. In ileum, expressed to the crypt and villus epithelia, whereas in trachea expressed in both surface epithelium and submucosal glands.

It localises to the secreted. It is found in the extracellular space. Its function is as follows. May be involved in mediating calcium-activated chloride conductance. May play critical roles in goblet cell metaplasia, mucus hypersecretion, cystic fibrosis and AHR. May be involved in the regulation of mucus production and/or secretion by goblet cells. Involved in the regulation of tissue inflammation in the innate immune response. May play a role as a tumor suppressor. Induces MUC5AC. Induces a cAMP-dependent chloride conductance possibly through effects on CFTR in colon carcinoma cells. This is Calcium-activated chloride channel regulator 1 (CLCA1) from Sus scrofa (Pig).